We begin with the raw amino-acid sequence, 366 residues long: Aminomethyltransferase (366 aa).

This sequence belongs to the GcvT family. In terms of assembly, the glycine cleavage system is composed of four proteins: P, T, L and H.

The enzyme catalyses N(6)-[(R)-S(8)-aminomethyldihydrolipoyl]-L-lysyl-[protein] + (6S)-5,6,7,8-tetrahydrofolate = N(6)-[(R)-dihydrolipoyl]-L-lysyl-[protein] + (6R)-5,10-methylene-5,6,7,8-tetrahydrofolate + NH4(+). Its function is as follows. The glycine cleavage system catalyzes the degradation of glycine. The chain is Aminomethyltransferase from Bacillus cereus (strain ATCC 10987 / NRS 248).